The sequence spans 409 residues: Microfibrillar-associated protein 3-like (409 aa).

The N-terminal stretch at 1 to 28 is a signal peptide; the sequence is MGLLKSHLTVCLPPSVPFLILVSTLATA. Over 29–148 the chain is Extracellular; sequence KSVTNSTLNG…TLRVIFTSGD (120 aa). Residues N33, N37, N67, N111, and N135 are each glycosylated (N-linked (GlcNAc...) asparagine). Residues 47–141 enclose the Ig-like C2-type domain; it reads PVIIARTDHI…GTINNTVTLR (95 aa). C68 and C125 are joined by a disulfide. A helical transmembrane segment spans residues 149 to 169; the sequence is MGVYYMVVCLVAFTIVMILNI. Topologically, residues 170-409 are cytoplasmic; that stretch reads TRLCMMSSHL…NTCIIYESHV (240 aa). The residue at position 287 (Y287) is a Phosphotyrosine. S298, S303, S306, and S307 each carry phosphoserine. Residues 319–392 form a disordered region; it reads VSVHPQSKKD…LPPAHLETTE (74 aa). Positions 333–348 are enriched in acidic residues; the sequence is QEGENLEVKDEEETEP. A compositionally biased stretch (polar residues) spans 362–372; the sequence is DITTTELTSEE.

The protein resides in the cell membrane. It localises to the nucleus. Its subcellular location is the cytoplasm. Its function is as follows. May participate in the nuclear signaling of EGFR and MAPK1/ERK2. The chain is Microfibrillar-associated protein 3-like (Mfap3l) from Rattus norvegicus (Rat).